Reading from the N-terminus, the 106-residue chain is Ferredoxin (106 aa).

Residues cysteine 8 and cysteine 16 each contribute to the [3Fe-4S] cluster site. Positions 20, 39, 42, and 45 each coordinate [4Fe-4S] cluster. The 4Fe-4S ferredoxin-type domain maps to 30 to 59; that stretch reads RMLYIHPDECVDCGACEPVCPVEAIYYEDD. A [3Fe-4S] cluster-binding site is contributed by cysteine 49. The tract at residues 81–106 is disordered; it reads PGGASKVGQTDNDPQAIKDLPPQGED.

It depends on [4Fe-4S] cluster as a cofactor. [3Fe-4S] cluster is required as a cofactor.

Its function is as follows. Ferredoxins are iron-sulfur proteins that transfer electrons in a wide variety of metabolic reactions. In Mycolicibacterium smegmatis (Mycobacterium smegmatis), this protein is Ferredoxin (fdxA).